The chain runs to 431 residues: Protein S-Myc (431 aa).

Tyr-36 is modified (phosphotyrosine; by Tyr-kinases). Positions 348 to 400 constitute a bHLH domain; that stretch reads ERRRNHNRMERQRRDIMRSSFLNLRDLVPELVHNEKAAKVVILKKATEYIHTL. A leucine-zipper region spans residues 400 to 421; it reads LQADESKLLVERKKLYERQQQL.

In terms of assembly, efficient DNA binding requires dimerization with another bHLH protein.

It is found in the nucleus. Has apoptosis-inducing activity. The sequence is that of Protein S-Myc (Mycs) from Mus musculus (Mouse).